Consider the following 300-residue polypeptide: MSAPTVVGQRDPEKAWAYKKDVAWYRTELSEETIGPMRPILELYSKVPPESVVEWIKTVRDKAWEVYPYGTIGMFGFLTLSLPTHPSYPDILASLQSGKKTFLDIGCCVGQELRSLTYAGVPSENLYGVDLHQGFLDIGYELFRDSETLKSTLLAADVFDENSEVLKDVEGKIDVVHAGSFFHLFDWDQQVTAAKRVVRLLRPQPGSILVGKQAGDVNAGQKSRPGKLGSRYRHNAESWKKLWQQVAAETGTQWEVSVRELEDKEYFREMTGGVDLAKVKSYGDWNPETTRRIEFLFRRA.

Residues 130–131 (DL) and 157–158 (DV) contribute to the S-adenosyl-L-methionine site.

The protein belongs to the class I-like SAM-binding methyltransferase superfamily. As to quaternary structure, homodimer.

It catalyses the reaction phomoidride A + S-adenosyl-L-methionine = (-)-phomoidride B + methanol + S-adenosyl-L-homocysteine + H(+). Its pathway is secondary metabolite biosynthesis. In terms of biological role, O-methyltransferase; part of the gene cluster that mediates the biosynthesis of the antihypercholesterolemic agents phomoidrides which are dimeric anhydrides. Within the pathway, phiE catalyzes the acetalization reaction that converts phomoidride A to phomoidride B. The pathway begins with the highly reducing polyketide synthase phiA that catalyzes the formation of a C12-fatty acyl-ACP, starting from one acetate and 5 malonate units. The hydrolase phiM is involved in the release of the C12-fatty acyl chain from phiA. The alkylcitrate synthase (ACS) phiJ and the alkylcitrate dehydratase (ACDH) phiI then give rise to decarboxylated monomeric anhydrides by coupling the C12-fatty acyl chain with oxalacetic acid. The cyclase phiC is responsible for the dimerization of the monomeric anhydrides which leads to the production of prephomoidride that contains the characteristic bicyclo[4.3.1]deca-1,6-diene system of phomoidrides. Iterative oxidation catalyzed by the alpha-ketoglutarate-dependent dioxygenase phiK produced then phomoidride A. Finally, the methyltransferase phiE converts phomoidride A to phomoidride B via an acetalization reaction. The phosphatidylethanolamine-binding protein phiB and phiN are not essential for dimerization and their functions have still to be determined. The protein is O-methyltransferase phiE of Fungal sp. (strain ATCC 74256).